We begin with the raw amino-acid sequence, 384 residues long: dTDP-dihydrostreptose--streptidine-6-phosphate dihydrostreptosyltransferase (384 aa).

The catalysed reaction is dTDP-L-dihydrostreptose + streptidine 6-phosphate = O-(1-&gt;4)-alpha-L-dihydrostreptosyl-streptidine 6-phosphate + dTDP + H(+). It participates in antibiotic biosynthesis; streptomycin biosynthesis. Its function is as follows. Is probably a dihydrostreptosyl glycosyltransferase, involved in the first glycosylation step condensing streptidine-6-phosphate and dihydrostreptose. This chain is dTDP-dihydrostreptose--streptidine-6-phosphate dihydrostreptosyltransferase (strH), found in Streptomyces griseus.